Here is a 357-residue protein sequence, read N- to C-terminus: MSAPTILIMAGGTGGHIMPGLAVAEVLRERGWRVLWLGNPDKMEGRLVPPRGIELVPLRFQGVRGRGAAALLKLPFLLARACAQAWRRLADIRPDVVLGMGGYVAFPGGVMAALRRTPLVVHEQNAVAGTANRWLARLARRVLSGFPGVLPRGEALGNPVRADLCALPEPAERYAGRSGALRVLVVGGSLGAHALNTTVPQALALLPEQARPQVVHQAGEQHLPALQQAYAQAGVQADCRAFIDDMADAMAQADLLICRAGAMTVSEVAAAGVAALFVPFPHAIDDHQTANARFLSDAQAAWLQPQASLTPQWLAQWLGQRTRQELQAVAGRARTHALPRAAAHIADVCEQAARRAS.

UDP-N-acetyl-alpha-D-glucosamine is bound by residues 13-15 (TGG), Asn125, Arg161, Ser189, Ile243, and Gln288.

The protein belongs to the glycosyltransferase 28 family. MurG subfamily.

It localises to the cell inner membrane. The catalysed reaction is di-trans,octa-cis-undecaprenyl diphospho-N-acetyl-alpha-D-muramoyl-L-alanyl-D-glutamyl-meso-2,6-diaminopimeloyl-D-alanyl-D-alanine + UDP-N-acetyl-alpha-D-glucosamine = di-trans,octa-cis-undecaprenyl diphospho-[N-acetyl-alpha-D-glucosaminyl-(1-&gt;4)]-N-acetyl-alpha-D-muramoyl-L-alanyl-D-glutamyl-meso-2,6-diaminopimeloyl-D-alanyl-D-alanine + UDP + H(+). It participates in cell wall biogenesis; peptidoglycan biosynthesis. Its function is as follows. Cell wall formation. Catalyzes the transfer of a GlcNAc subunit on undecaprenyl-pyrophosphoryl-MurNAc-pentapeptide (lipid intermediate I) to form undecaprenyl-pyrophosphoryl-MurNAc-(pentapeptide)GlcNAc (lipid intermediate II). This Bordetella pertussis (strain Tohama I / ATCC BAA-589 / NCTC 13251) protein is UDP-N-acetylglucosamine--N-acetylmuramyl-(pentapeptide) pyrophosphoryl-undecaprenol N-acetylglucosamine transferase.